The chain runs to 64 residues: Large ribosomal subunit protein bL35 (64 aa).

Residues 1 to 14 (MKQKTHKGAAKRIK) are compositionally biased toward basic residues. The tract at residues 1–50 (MKQKTHKGAAKRIKISGSGKLRREQANRRHLLEGKPSKRTRRLKGTEDVA) is disordered. Positions 21 to 36 (LRREQANRRHLLEGKP) are enriched in basic and acidic residues.

This sequence belongs to the bacterial ribosomal protein bL35 family.

The chain is Large ribosomal subunit protein bL35 from Corynebacterium jeikeium (strain K411).